A 388-amino-acid polypeptide reads, in one-letter code: MKKILLLGSGELGKEFVISAQRKGQHVIACDSYAGAPAMQVADEFEVFDMLDGEALERVVEKHHPDIIVPEIEAIRTERLYDFEKEGIQVVPSARAVNFTMNRKAIRDLAAKELGLKTANYFYAKTLDELKEAAAKIGFPCVVKPLMSSSGKGQSLVKSADELEHAWEYGCSGSRGDIRELIIEEFIKFDSEITLLTVTQKNGPTLFCPPIGHVQKGGDYRESFQPAHIDPAHLKEAEEMAEKVTRALTGAGLWGVEFFLSHENGVYFSELSPRPHDTGMVTLAGTQNLNEFELHLRAVLGLPIPGIKQERIGASAVILSPIASQERPQYRGMEEVTKEEDTYLRIFGKPFTRVNRRMGVVLCYAPLNSDLDALRDKAKRIAEKVEVY.

N(1)-(5-phospho-beta-D-ribosyl)glycinamide is bound by residues 11 to 12 (EL) and Glu-71. ATP is bound by residues Arg-103, Lys-144, 149–154 (SSGKGQ), 184–187 (EEFI), and Glu-192. An ATP-grasp domain is found at 108-300 (DLAAKELGLK…EFELHLRAVL (193 aa)). Glu-257 and Glu-270 together coordinate Mg(2+). N(1)-(5-phospho-beta-D-ribosyl)glycinamide is bound by residues Asp-277, Lys-349, and 356–357 (RR).

It belongs to the PurK/PurT family. Homodimer.

It carries out the reaction N(1)-(5-phospho-beta-D-ribosyl)glycinamide + formate + ATP = N(2)-formyl-N(1)-(5-phospho-beta-D-ribosyl)glycinamide + ADP + phosphate + H(+). Its pathway is purine metabolism; IMP biosynthesis via de novo pathway; N(2)-formyl-N(1)-(5-phospho-D-ribosyl)glycinamide from N(1)-(5-phospho-D-ribosyl)glycinamide (formate route): step 1/1. Its function is as follows. Involved in the de novo purine biosynthesis. Catalyzes the transfer of formate to 5-phospho-ribosyl-glycinamide (GAR), producing 5-phospho-ribosyl-N-formylglycinamide (FGAR). Formate is provided by PurU via hydrolysis of 10-formyl-tetrahydrofolate. In Bacteroides thetaiotaomicron (strain ATCC 29148 / DSM 2079 / JCM 5827 / CCUG 10774 / NCTC 10582 / VPI-5482 / E50), this protein is Formate-dependent phosphoribosylglycinamide formyltransferase.